A 376-amino-acid polypeptide reads, in one-letter code: MYG1 exonuclease (376 aa).

A mitochondrion-targeting transit peptide spans 1–47 (MGHRFLRGLLTLLLPPPPLYTRHRMLGPESVPPPKRSRSKLMAPPRI). Phosphoserine is present on Ser120. N6-acetyllysine is present on residues Lys267 and Lys273.

The protein belongs to the MYG1 family. Ubiquitously expressed, with highest levels in testis.

The protein localises to the nucleus. Its subcellular location is the nucleoplasm. It is found in the mitochondrion matrix. The protein resides in the nucleolus. Its function is as follows. 3'-5' RNA exonuclease which cleaves in situ on specific transcripts in both nucleus and mitochondrion. Involved in regulating spatially segregated organellar RNA processing, acts as a coordinator of nucleo-mitochondrial crosstalk. In nucleolus, processes pre-ribosomal RNA involved in ribosome assembly and alters cytoplasmic translation. In mitochondrial matrix, processes 3'-termini of the mito-ribosomal and messenger RNAs and controls translation of mitochondrial proteins. This is MYG1 exonuclease from Homo sapiens (Human).